Consider the following 119-residue polypeptide: DNA-directed RNA polymerase subunit omega (119 aa).

It belongs to the RNA polymerase subunit omega family. As to quaternary structure, the RNAP catalytic core consists of 2 alpha, 1 beta, 1 beta' and 1 omega subunit. When a sigma factor is associated with the core the holoenzyme is formed, which can initiate transcription.

The enzyme catalyses RNA(n) + a ribonucleoside 5'-triphosphate = RNA(n+1) + diphosphate. In terms of biological role, promotes RNA polymerase assembly. Latches the N- and C-terminal regions of the beta' subunit thereby facilitating its interaction with the beta and alpha subunits. This Caulobacter vibrioides (strain ATCC 19089 / CIP 103742 / CB 15) (Caulobacter crescentus) protein is DNA-directed RNA polymerase subunit omega (rpoZ).